The sequence spans 74 residues: Protein DELETION OF SUV3 SUPPRESSOR 1(I) (74 aa).

The disordered stretch occupies residues 35–74; the sequence is EKEEVKEVSQQWEDDWDDDDVNDDFSRQLRKELENGTDKK. Residues 46–57 are compositionally biased toward acidic residues; sequence WEDDWDDDDVND. A compositionally biased stretch (basic and acidic residues) spans 58–74; that stretch reads DFSRQLRKELENGTDKK.

This sequence belongs to the DSS1/SEM1 family. In terms of assembly, part of the 26S proteasome. Interacts with BRCA2A and BRCA2B. Interacts with UCH1 and UCH2. Can form a tripartite complex with both RAD51 and BRCA2B or both DMC1 and BRCA2B.

In terms of biological role, subunit of the 26S proteasome which plays a role in ubiquitin-dependent proteolysis. In Arabidopsis thaliana (Mouse-ear cress), this protein is Protein DELETION OF SUV3 SUPPRESSOR 1(I).